The following is a 232-amino-acid chain: Large ribosomal subunit protein uL1 (232 aa).

The protein belongs to the universal ribosomal protein uL1 family. In terms of assembly, part of the 50S ribosomal subunit.

Its function is as follows. Binds directly to 23S rRNA. The L1 stalk is quite mobile in the ribosome, and is involved in E site tRNA release. Protein L1 is also a translational repressor protein, it controls the translation of the L11 operon by binding to its mRNA. This Paraburkholderia phymatum (strain DSM 17167 / CIP 108236 / LMG 21445 / STM815) (Burkholderia phymatum) protein is Large ribosomal subunit protein uL1.